The following is a 941-amino-acid chain: Protein BREAST CANCER SUSCEPTIBILITY 1 homolog (941 aa).

The RING-type zinc-finger motif lies at 16–54 (CPICLSLYNSAVSLSCNHVFCNACIVKSMKMDATCPVCK). Disordered stretches follow at residues 87–282 (FVSQ…ILPS) and 303–528 (KVKV…GKDD). Basic and acidic residues-rich tracts occupy residues 96–115 (SDKE…DKNR) and 125–136 (KRNEYGKTKEID). Over residues 157 to 173 (LLQNLSAESLTKPTESV) the composition is skewed to polar residues. Over residues 175–196 (TAEKPKDYTENTVIRLDEHPSL) the composition is skewed to basic and acidic residues. A compositionally biased stretch (polar residues) spans 216–236 (NSSQRTESDQLLGTTPVNVPS). Residues 242-255 (DSDHESPSKEDEQQ) are compositionally biased toward basic and acidic residues. Positions 298–305 (QKKLPKVK) match the Nuclear localization signal 1 motif. 2 stretches are compositionally biased toward polar residues: residues 329–357 (GVSQ…SGTI) and 376–391 (SKAQ…NVSN). 2 stretches are compositionally biased toward basic and acidic residues: residues 428–453 (GKGD…EKPS) and 477–487 (KTSEKKLKLDS). Residues 444 to 451 (EKRSPTEK) carry the Nuclear localization signal 2 motif. Residues 489–498 (MISSKATQPH) are compositionally biased toward polar residues. The segment covering 512–528 (DKQDSRNNRKSTVGKDD) has biased composition (basic and acidic residues). The C2HC pre-PHD-type zinc-finger motif lies at 561-612 (KFTCAFCQCSEDTEASGEMTHYYRGEPVSADFNGGSKVIHVHKNCAEWAPNV). The PHD-type; degenerate zinc finger occupies 632-681 (ISCSCCGLKGAALGCYNKSCKNSFHVTCAKLIPECRWDNVKFVMLCPLDA). 2 consecutive BRCT domains span residues 724 to 819 (KQFH…PYEI) and 840 to 941 (KKPK…LVLI).

In terms of assembly, forms heterodimer with BARD1/ROW1. As to expression, expressed ubiquitously with highest levels in flower buds. Mostly expressed in flowers and siliques, and, to a lower extent, in roots, rosette leaves, inflorescence and young cauline leaves.

It localises to the nucleus. Its function is as follows. Plays a role in DNA repair and in cell-cycle control. Required for the repair of DNA double-strand breaks (DSBs), both natural and induced by genotoxic stress, by homologous recombination (HR). This is Protein BREAST CANCER SUSCEPTIBILITY 1 homolog from Arabidopsis thaliana (Mouse-ear cress).